A 939-amino-acid chain; its full sequence is Protein translocase subunit SecA (939 aa).

ATP is bound by residues Gln85, 103-107 (GEGKT), and Asp504. The disordered stretch occupies residues 850 to 939 (PVQDGAERPS…KGGGGRRRKK (90 aa)). The segment covering 854 to 864 (GAERPSLEKEG) has biased composition (basic and acidic residues). Residues 924–939 (ERRKAQKGGGGRRRKK) are compositionally biased toward basic residues.

It belongs to the SecA family. Monomer and homodimer. Part of the essential Sec protein translocation apparatus which comprises SecA, SecYEG and auxiliary proteins SecDF. Other proteins may also be involved.

It is found in the cell membrane. The protein localises to the cytoplasm. It catalyses the reaction ATP + H2O + cellular proteinSide 1 = ADP + phosphate + cellular proteinSide 2.. Part of the Sec protein translocase complex. Interacts with the SecYEG preprotein conducting channel. Has a central role in coupling the hydrolysis of ATP to the transfer of proteins into and across the cell membrane, serving as an ATP-driven molecular motor driving the stepwise translocation of polypeptide chains across the membrane. In Streptomyces griseus subsp. griseus (strain JCM 4626 / CBS 651.72 / NBRC 13350 / KCC S-0626 / ISP 5235), this protein is Protein translocase subunit SecA.